We begin with the raw amino-acid sequence, 263 residues long: tRNA (guanine-N(7)-)-methyltransferase (263 aa).

Positions 1–33 are disordered; that stretch reads MSDHGRMHSTGSEVAAPVAPDPDTEGVHPHFNR. Positions 89, 114, 146, and 169 each coordinate S-adenosyl-L-methionine. D169 is an active-site residue. Substrate-binding positions include K173, D205, and 242 to 245; that span reads TKYE.

The protein belongs to the class I-like SAM-binding methyltransferase superfamily. TrmB family.

The enzyme catalyses guanosine(46) in tRNA + S-adenosyl-L-methionine = N(7)-methylguanosine(46) in tRNA + S-adenosyl-L-homocysteine. It functions in the pathway tRNA modification; N(7)-methylguanine-tRNA biosynthesis. Catalyzes the formation of N(7)-methylguanine at position 46 (m7G46) in tRNA. In Mycolicibacterium gilvum (strain PYR-GCK) (Mycobacterium gilvum (strain PYR-GCK)), this protein is tRNA (guanine-N(7)-)-methyltransferase.